The primary structure comprises 433 residues: UDP-N-acetylglucosamine 1-carboxyvinyltransferase (433 aa).

Phosphoenolpyruvate is bound at residue 34–35 (KN). R104 is a binding site for UDP-N-acetyl-alpha-D-glucosamine. C128 acts as the Proton donor in catalysis. C128 carries the 2-(S-cysteinyl)pyruvic acid O-phosphothioketal modification. Residues D320 and I342 each contribute to the UDP-N-acetyl-alpha-D-glucosamine site.

This sequence belongs to the EPSP synthase family. MurA subfamily.

The protein localises to the cytoplasm. It carries out the reaction phosphoenolpyruvate + UDP-N-acetyl-alpha-D-glucosamine = UDP-N-acetyl-3-O-(1-carboxyvinyl)-alpha-D-glucosamine + phosphate. It participates in cell wall biogenesis; peptidoglycan biosynthesis. Its function is as follows. Cell wall formation. Adds enolpyruvyl to UDP-N-acetylglucosamine. The polypeptide is UDP-N-acetylglucosamine 1-carboxyvinyltransferase (Parasynechococcus marenigrum (strain WH8102)).